Consider the following 117-residue polypeptide: Putative phosphotransferase enzyme IIB component MPN_268 (117 aa).

Residues 1-21 (MKVLLWIGYVLSFGLLYLYLV) traverse the membrane as a helical segment. In terms of domain architecture, PTS EIIB type-1 spans 42-117 (PFAVRDFIAA…QLKQQIENER (76 aa)).

The protein resides in the membrane. The phosphoenolpyruvate-dependent sugar phosphotransferase system (PTS), a major carbohydrate active -transport system, catalyzes the phosphorylation of incoming sugar substrates concomitant with their translocation across the cell membrane. The chain is Putative phosphotransferase enzyme IIB component MPN_268 from Mycoplasma pneumoniae (strain ATCC 29342 / M129 / Subtype 1) (Mycoplasmoides pneumoniae).